A 222-amino-acid chain; its full sequence is 26S proteasome non-ATPase regulatory subunit 9 (222 aa).

In terms of domain architecture, PDZ spans 108 to 194; the sequence is QARDMAEARE…KPLNVTVIRR (87 aa). Position 128 is a phosphoserine (Ser-128).

The protein belongs to the proteasome subunit p27 family. In terms of assembly, interacts with PSMC3. Part of a transient complex (modulator) containing PSMD9, PSMC6 and PSMC3 formed during the assembly of the 26S proteasome.

Functionally, acts as a chaperone during the assembly of the 26S proteasome, specifically of the base subcomplex of the PA700/19S regulatory complex (RC). During the base subcomplex assembly is part of an intermediate PSMD9:PSMC6:PSMC3 module, also known as modulator trimer complex; PSMD9 is released during the further base assembly process. In Mus musculus (Mouse), this protein is 26S proteasome non-ATPase regulatory subunit 9 (Psmd9).